The chain runs to 910 residues: Protein translocase subunit SecA (910 aa).

Residues Gln87, 105 to 109, and Asp501 each bind ATP; that span reads GEGKT. Residues Cys894, Cys896, Cys905, and His906 each contribute to the Zn(2+) site.

It belongs to the SecA family. In terms of assembly, monomer and homodimer. Part of the essential Sec protein translocation apparatus which comprises SecA, SecYEG and auxiliary proteins SecDF-YajC and YidC. The cofactor is Zn(2+).

The protein resides in the cell inner membrane. It is found in the cytoplasm. The catalysed reaction is ATP + H2O + cellular proteinSide 1 = ADP + phosphate + cellular proteinSide 2.. Part of the Sec protein translocase complex. Interacts with the SecYEG preprotein conducting channel. Has a central role in coupling the hydrolysis of ATP to the transfer of proteins into and across the cell membrane, serving both as a receptor for the preprotein-SecB complex and as an ATP-driven molecular motor driving the stepwise translocation of polypeptide chains across the membrane. This chain is Protein translocase subunit SecA, found in Acidiphilium cryptum (strain JF-5).